The primary structure comprises 321 residues: tRNA-dihydrouridine synthase B (321 aa).

Residues 16–18 (PMA) and Q70 each bind FMN. Catalysis depends on C100, which acts as the Proton donor. FMN contacts are provided by residues K139, 200-202 (NGD), and 224-225 (GR).

It belongs to the Dus family. DusB subfamily. It depends on FMN as a cofactor.

The catalysed reaction is a 5,6-dihydrouridine in tRNA + NAD(+) = a uridine in tRNA + NADH + H(+). It carries out the reaction a 5,6-dihydrouridine in tRNA + NADP(+) = a uridine in tRNA + NADPH + H(+). In terms of biological role, catalyzes the synthesis of 5,6-dihydrouridine (D), a modified base found in the D-loop of most tRNAs, via the reduction of the C5-C6 double bond in target uridines. In Pectobacterium carotovorum (Erwinia carotovora), this protein is tRNA-dihydrouridine synthase B.